Here is a 365-residue protein sequence, read N- to C-terminus: 3-isopropylmalate dehydrogenase (365 aa).

G80–E91 serves as a coordination point for NAD(+). Substrate contacts are provided by R98, R108, R137, and D226. Positions 226, 251, and 255 each coordinate Mg(2+). Residue G290–N301 participates in NAD(+) binding.

The protein belongs to the isocitrate and isopropylmalate dehydrogenases family. As to quaternary structure, homodimer. The cofactor is Mg(2+). Mn(2+) serves as cofactor.

It is found in the cytoplasm. The enzyme catalyses (2R,3S)-3-isopropylmalate + NAD(+) = 4-methyl-2-oxopentanoate + CO2 + NADH. The protein operates within amino-acid biosynthesis; L-leucine biosynthesis; L-leucine from 3-methyl-2-oxobutanoate: step 3/4. Its function is as follows. Catalyzes the oxidation of 3-carboxy-2-hydroxy-4-methylpentanoate (3-isopropylmalate) to 3-carboxy-4-methyl-2-oxopentanoate. The product decarboxylates to 4-methyl-2 oxopentanoate. This chain is 3-isopropylmalate dehydrogenase (LEU2), found in Candida glabrata (strain ATCC 2001 / BCRC 20586 / JCM 3761 / NBRC 0622 / NRRL Y-65 / CBS 138) (Yeast).